A 251-amino-acid polypeptide reads, in one-letter code: Flap endonuclease Xni (251 aa).

Mg(2+) is bound at residue Asp-104. Residues 160–249 form the 5'-3' exonuclease domain; it reads VQPQQLPDYW…IDGNLQQLRL (90 aa). K(+) contacts are provided by Leu-171, Ala-172, Pro-180, Val-182, and Ile-185. An interaction with DNA region spans residues 184-189; it reads GIGPKS.

This sequence belongs to the Xni family. Mg(2+) is required as a cofactor. K(+) serves as cofactor.

Its function is as follows. Has flap endonuclease activity. During DNA replication, flap endonucleases cleave the 5'-overhanging flap structure that is generated by displacement synthesis when DNA polymerase encounters the 5'-end of a downstream Okazaki fragment. The chain is Flap endonuclease Xni from Shigella flexneri serotype 5b (strain 8401).